The sequence spans 195 residues: MARCKS-related protein (195 aa).

The tract at residues 1-195 is disordered; the sequence is MGSQSSKAPR…PTPASAEQNE (195 aa). Gly2 carries the N-myristoyl glycine lipid modification. At Thr14 the chain carries Phosphothreonine. Positions 16–26 are enriched in low complexity; that stretch reads EEAAGASPAKA. Residues Ser22, Ser36, Ser41, and Ser48 each carry the phosphoserine modification. Over residues 53-64 the composition is skewed to low complexity; that stretch reads GTDEAAGATGDA. The residue at position 71 (Ser71) is a Phosphoserine. Positions 76–85 are enriched in basic and acidic residues; that stretch reads AKGEVPPKET. Residue Thr85 is modified to Phosphothreonine. Over residues 86–98 the composition is skewed to basic residues; the sequence is PKKKKKFSFKKPF. The effector domain involved in lipid-binding and calmodulin-binding stretch occupies residues 87–110; that stretch reads KKKKKFSFKKPFKLSGLSFKRNRK. 6 positions are modified to phosphoserine: Ser93, Ser101, Ser104, Ser119, Ser120, and Ser135. Thr148 carries the phosphothreonine modification. Ser151, Ser162, and Ser165 each carry phosphoserine. Low complexity predominate over residues 153–195; sequence EPQAKGAEASAASEEEAGPQATEPSTPSGPESGPTPASAEQNE. 2 positions are modified to phosphothreonine: Thr178 and Thr187.

It belongs to the MARCKS family. Binds to filamentous actin (F-actin), but not to monomeric G-actin, independently of its phosphorylation status. Phosphorylated. Phosphorylation at Ser-120 and Thr-178 is non-redundantly catalyzed by MAPK8 in vivo. Phosphorylation at Thr-148 is preferentially catalyzed by MAPK8 in vivo, but this modification can also be catalyzed by other kinases in the absence of MAPK8. May be phosphorylated by protein kinase C, which disrupts the interaction with calmodulin.

It localises to the cytoplasm. The protein resides in the cytoskeleton. It is found in the cell membrane. Functionally, controls cell movement by regulating actin cytoskeleton homeostasis and filopodium and lamellipodium formation. When unphosphorylated, induces cell migration. When phosphorylated by MAPK8, induces actin bundles formation and stabilization, thereby reducing actin plasticity, hence restricting cell movement, including neuronal migration. May be involved in coupling the protein kinase C and calmodulin signal transduction systems. The chain is MARCKS-related protein (MARCKSL1) from Homo sapiens (Human).